The primary structure comprises 161 residues: Anaerobic nitrite reductase Glb1-1 (161 aa).

A Globin domain is found at 8–157 (CFTEEQEALV…LVGAIKSEMK (150 aa)). The short motif at 41–45 (EIAPS) is the Homodimerization element. Residues S51, K65, H69, K99, T103, and H104 each coordinate heme b. A Homodimerization motif is present at residues 111 to 123 (NEHFEVTKFALLD).

Belongs to the plant globin family. As to quaternary structure, homodimer. It depends on heme b as a cofactor. Mainly expressed in root nodules, and, to a lower extent, in leaves, roots, stems, flowers and fruits. Accumulates in mature root nodules.

It catalyses the reaction Fe(III)-heme b-[protein] + nitric oxide + H2O = Fe(II)-heme b-[protein] + nitrite + 2 H(+). Phytoglobin that reduces nitrite to nitric oxide (NO) under anoxic conditions (e.g. during flooding or in waterlogged soil) and upon root nodulation. Required for general plant development and during nodulation, especially for the onset of symbiosis. Monitors nitric oxide (NO) levels during early phase of the nitrogen-fixing symbiosis and buffers oxygen in functioning nodules. May not function as an oxygen storage or transport protein. Has an unusually high affinity for O(2) through a hexacoordinate heme iron because of a very low dissociation constant. This chain is Anaerobic nitrite reductase Glb1-1, found in Lotus japonicus (Lotus corniculatus var. japonicus).